We begin with the raw amino-acid sequence, 1485 residues long: Sex-determining transformer protein 2 (1485 aa).

Positions 1-28 (MSLRSNKLLVAAVIFTVVTFGLLLTSSI) are cleaved as a signal peptide. Helical transmembrane passes span 438–458 (VVYF…FFAW), 490–510 (IELN…NTYL), 584–604 (WPFI…FVDI), 732–752 (GILL…VMLI), 923–943 (LLAS…FSIT), 950–970 (LIFS…ISLF), 980–1000 (DSAV…LSLF), 1033–1053 (AQVF…AGVV), and 1063–1083 (TVIL…VLVA). The interaction with fem-3 stretch occupies residues 1131-1271 (DFHIRPTNMS…MLHMIEKVQK (141 aa)). Residues 1143 to 1175 (YAPPPAKKRAKQTNNETDPEKKEDEPGTSNANN) form a disordered region. Residues 1181–1201 (AAHRLAILPWHFVLGGIPVDL) traverse the membrane as a helical segment. Disordered regions lie at residues 1228–1252 (SELE…PAPE), 1275–1306 (EKEA…PSHR), and 1348–1384 (EMPP…PPHP). Basic and acidic residues predominate over residues 1275-1284 (EKEAKEKVHQ). The interval 1401–1422 (CEDVYWTYNDGRLPPNVAMPPR) is MX regulatory domain; required for tra-1 binding. Positions 1442–1485 (PPGQPSIPIPAEAMALREERARAHREQEQRDNSQSPSPSPEPGL) are disordered. Residues 1456 to 1472 (ALREERARAHREQEQRD) are compositionally biased toward basic and acidic residues.

In terms of assembly, interacts with tra-1 and fem-3. In terms of tissue distribution, somatic and germline tissues.

Its subcellular location is the membrane. Its function is as follows. Plays a major role in controlling sexual cell fates. Promotes female development in XX animals where it sequesters one or more of the FEM proteins to the membrane thereby freeing the tra-1 protein (a putative transcription factor) to enter the nucleus and promote female development. In XO animals it acts as a receptor for her-1 which prevents it from binding to FEM proteins thereby repressing the activity of tra-1. Negatively regulates male development when bound to fem-3 and is required together with tra-1 for promoting spermatogenesis. This Caenorhabditis remanei (Caenorhabditis vulgaris) protein is Sex-determining transformer protein 2.